The primary structure comprises 459 residues: ATP-dependent RNA helicase me31b (459 aa).

Residues 1–267 are recA-like domain 1; it reads MMTEKLNSGH…EINLMEELTL (267 aa). S8 and S29 each carry phosphoserine. Positions 58-86 match the Q motif motif; sequence NEFEEFCLKRELLMGIFEKGWERPSPIQE. Residues 89–259 form the Helicase ATP-binding domain; sequence IPIALSGKDV…EKHLREPYEI (171 aa). An ATP-binding site is contributed by 102-109; sequence AKNGTGKT. The DEAD box signature appears at 207–210; sequence DEAD. A gyf binding region spans residues 264–431; it reads ELTLKGVTQY…PKVIDPALYV (168 aa). In terms of domain architecture, Helicase C-terminal spans 269–429; sequence GVTQYYAFVQ…PIPKVIDPAL (161 aa). A recA-like domain 2 region spans residues 432-459; the sequence is ANVGASVGDTCNNSDLNNSANEEGNVSK. Position 450 is a phosphoserine (S450).

The protein belongs to the DEAD box helicase family. DDX6/DHH1 subfamily. As to quaternary structure, conserved component of different types of multiprotein ribonucleoprotein complexes (RNPs) that form distinct germ granules (P-body, nuage, sponge body or polar granules) and P-body-like neuronal RNPs. Consequently it interacts with a wide variety of proteins, some of which appear to be common interactive partners in almost all RNPs types i.e. cup and tral, whereas other interactions are specific to a germ granule/RNP. Core functional components in me31B-containing RNPs include RNA regulatory proteins (such as translational repressor, RNA-decapping and exonuclease proteins), RNA localization proteins and additional proteins depending on the biological context of the RNPs. In the P-body RNPs, interacts with at least the translation repressor proteins tral, cup and Edc3, and the mRNA localization factor yps. Interaction with tral or Edc3 is required for translation repression and possibly RNA decapping; binding to tral and Edc3 is mutually exclusive. In the nuage and germ plasm polar granule RNPs, interacts with at least tral, cup, and additional proteins required for assembly and function of the germ granules such as tud, vas and aub. Interacts (when dimethylated on Arg residues) with tud; interaction is RNA-independent. Component of the osk RNP complex, which is composed of at least me31B, exu, yps, aret/bruno, cup, and the mRNA of osk. Component of the nanos RNP complex, which is composed of at least smg, cup, tral, me31B, the CCR4-NOT complex members Rga/NOT2 and Caf1-55, and the mRNA of nanos (nos). Interacts with tral and piRNA pathway components papi and AGO3; promotes interaction between nuage RNPs and the piRNA-mediated transposon silencing. Forms a RNP containing at least me31B, eIF4E1, cup, tral and pAbp; this interaction is required for the translational silencing of maternal mRNAs during the maternal-to-zygotic transition. In the sponge body, forms a RNP containing at least me31B, exu, yps and the mRNA of osk; interactions with exu and yps are RNA dependent. Component of a neuronal RNP, at least composed of me31B, tral and Fmr1. Component of the Atx2-Not1 repressor complex, composed of at least me31B, Atx2, tyf and pAbp. Interacts (via the C-terminus) with Atx2, tyf, pAbp and Lsm12a. Interacts (via RecA-like domain 2) with 4EHP-GYF2 complex member Gyf (via the me31B binding motif). Interacts with 4E-T, Edc3 and Patr-1. In terms of processing, symmetrically dimethylated on arginine residues. As to expression, ubiquitously expressed throughout the brain (at protein level). Expressed in the olfactory system including the antennal lobes, projection neurons, local interneurons, mushroom-body Kenyon cells and glial cells (at protein level).

It is found in the cytoplasm. It localises to the cytoplasmic ribonucleoprotein granule. The protein localises to the P-body. The protein resides in the endoplasmic reticulum. Its subcellular location is the cell projection. It is found in the dendrite. It carries out the reaction ATP + H2O = ADP + phosphate + H(+). Its function is as follows. ATP-dependent RNA helicase which is a core component of a variety of ribonucleoprotein complexes (RNPs) that play critical roles in translational repression and mRNA decapping during embryogenesis, oogenesis, neurogenesis and neurotransmission. Recruits core components and translational repressors to some RNP complexes, and mediates RNP aggregation into processing granules such as P-bodies. As part of a RNP complex containing tral, eIF4E1, cup, and pAbp, involved in RNP-mediated translational repression of maternal mRNAs during oogenesis and embryogenesis. As part of a RNP complex containing tral and the RNA localization factors exu and yps, mediates translational silencing of mRNAs such as osk/oskar and bcd/bicoid during their transport to the oocyte in order to prevent their translation until they reach their positional destinations. In neurons and possibly imaginal disks, involved in miRNA-mediated translational repression, possibly in association with components of the piRNA transposon silencing pathway. Involved in RNA localization and protein trafficking in the oocyte. As part of an ER-associated RNP containing tral, cup and yps, required for tral-dependent ER exit site formation and consequently efficient trafficking of proteins such as grk and yl through the secretory pathway. Component of neuron RNPs that mediate transport and translation of neuronal RNAs, including translation repression of synaptic transcripts in preparation for their dendritic targeting. As part of the Atx2-Not1 repressor complex promotes Not1-dependent post-transcriptional gene silencing in adult circadian pacemaker neurons in order to sustain high-amplitude circadian rhythms and Pdf cycling in a per-independent manner. Promotes the interaction between Atx2 and Not1 within the Atx2-Not1 RNP complex. Recruited to the 4EHP-GYF2 complex by Gyf, where it plays a role in 4EHP-GYF2 mediated translational repression and mRNA decay. This Drosophila melanogaster (Fruit fly) protein is ATP-dependent RNA helicase me31b (me31B).